We begin with the raw amino-acid sequence, 319 residues long: Transcription factor STKL2 (319 aa).

Residues 1–119 (MAPLESPATA…NKKANPQRVW (119 aa)) form a disordered region. Positions 21-34 (EIFKSSSEESKPKD) are enriched in basic and acidic residues. Positions 38–55 (VPSSKTLKSPSAAVNSKT) are enriched in polar residues. Positions 89–112 (RAGEGSTSRDMHVKRVKKEDDNKK) are enriched in basic and acidic residues.

It belongs to the GeBP family. As to expression, expressed strongly in leaves and flowers, weakly in roots, and very weakly in stems.

The protein resides in the nucleus. Its function is as follows. Transcription repressor that binds DNA in a sequence-specific manner, 5'-GCCT-3', to regulate the expression of PGR. Acts as a modulatory component for the glucose-triggered developmental leaf growth process. The sequence is that of Transcription factor STKL2 from Arabidopsis thaliana (Mouse-ear cress).